The sequence spans 207 residues: 8-oxoguanine DNA glycosylase/AP lyase (207 aa).

Catalysis depends on residues K129 and D147.

Belongs to the type-2 OGG1 family.

It catalyses the reaction 2'-deoxyribonucleotide-(2'-deoxyribose 5'-phosphate)-2'-deoxyribonucleotide-DNA = a 3'-end 2'-deoxyribonucleotide-(2,3-dehydro-2,3-deoxyribose 5'-phosphate)-DNA + a 5'-end 5'-phospho-2'-deoxyribonucleoside-DNA + H(+). In terms of biological role, catalyzes the excision of an oxidatively damaged form of guanine (7,8-dihydro-8-oxoguanine = 8-oxoG) from DNA. Also cleaves the DNA backbone at apurinic/apyrimidinic sites (AP sites). The sequence is that of 8-oxoguanine DNA glycosylase/AP lyase from Thermotoga maritima (strain ATCC 43589 / DSM 3109 / JCM 10099 / NBRC 100826 / MSB8).